The chain runs to 287 residues: Hydroxysteroid 11-beta-dehydrogenase 1-like protein (287 aa).

Residues 1–15 (MKVLLLTGLGALFFA) form the signal peptide. NADP(+) is bound by residues 36-62 (GASA…TAHT), 87-88 (DM), and 114-116 (NHI). Ser165 contacts substrate. Catalysis depends on Tyr178, which acts as the Proton acceptor. NADP(+)-binding positions include 178-182 (YSAAK) and 211-217 (GLRDRAS).

It belongs to the short-chain dehydrogenases/reductases (SDR) family.

The protein localises to the secreted. It carries out the reaction cortisone + NADPH + H(+) = cortisol + NADP(+). Functionally, unidirectional NADP(+)-dependent cortisol dehydrogenase (in vitro). This chain is Hydroxysteroid 11-beta-dehydrogenase 1-like protein (HSD11B1L), found in Macaca fascicularis (Crab-eating macaque).